We begin with the raw amino-acid sequence, 375 residues long: Alanine racemase (375 aa).

Lys-45 (proton acceptor; specific for D-alanine) is an active-site residue. Lys-45 is subject to N6-(pyridoxal phosphate)lysine. Arg-141 serves as a coordination point for substrate. Tyr-270 functions as the Proton acceptor; specific for L-alanine in the catalytic mechanism. Met-318 contacts substrate.

It belongs to the alanine racemase family. It depends on pyridoxal 5'-phosphate as a cofactor.

It carries out the reaction L-alanine = D-alanine. The protein operates within amino-acid biosynthesis; D-alanine biosynthesis; D-alanine from L-alanine: step 1/1. Its function is as follows. Catalyzes the interconversion of L-alanine and D-alanine. May also act on other amino acids. This is Alanine racemase (alr) from Pseudoalteromonas atlantica (strain T6c / ATCC BAA-1087).